We begin with the raw amino-acid sequence, 812 residues long: Lon protease (812 aa).

One can recognise a Lon N-terminal domain in the interval 22–215 (YAVLPLRDIV…KALSFMEAEI (194 aa)). 367 to 374 (GPPGVGKT) provides a ligand contact to ATP. The region spanning 602-783 (EDQVGVVTGL…GEVLKHALVR (182 aa)) is the Lon proteolytic domain. Active-site residues include serine 689 and lysine 732. The tract at residues 787-812 (PIEWTEQENPTAVPPVEDEAGASLAH) is disordered.

This sequence belongs to the peptidase S16 family. In terms of assembly, homohexamer. Organized in a ring with a central cavity.

It is found in the cytoplasm. It carries out the reaction Hydrolysis of proteins in presence of ATP.. Functionally, ATP-dependent serine protease that mediates the selective degradation of mutant and abnormal proteins as well as certain short-lived regulatory proteins. Required for cellular homeostasis and for survival from DNA damage and developmental changes induced by stress. Degrades polypeptides processively to yield small peptide fragments that are 5 to 10 amino acids long. Binds to DNA in a double-stranded, site-specific manner. Required for wild-type virulence during the initial stages of infection in the mouse model, but not essential for the establishment and maintenance of chronic infection in this host. The polypeptide is Lon protease (Brucella abortus (strain 2308)).